A 1358-amino-acid polypeptide reads, in one-letter code: Phosphoribosylformylglycinamidine synthase (1358 aa).

Position 2 is an N-acetylthreonine (Thr-2). The interval Ala-339–Gly-363 is disordered. ATP-binding positions include Gly-345 to Asp-356, Asn-424 to Tyr-426, and Ala-719. The Mg(2+) site is built by Asp-720, Glu-762, Asn-766, and Asp-930. Ser-932 provides a ligand contact to ATP. The 266-residue stretch at Val-1093–Gly-1358 folds into the Glutamine amidotransferase type-1 domain. The active-site Nucleophile is the Cys-1187. Catalysis depends on residues His-1319 and Glu-1321.

It in the N-terminal section; belongs to the FGAMS family.

It localises to the cytoplasm. It catalyses the reaction N(2)-formyl-N(1)-(5-phospho-beta-D-ribosyl)glycinamide + L-glutamine + ATP + H2O = 2-formamido-N(1)-(5-O-phospho-beta-D-ribosyl)acetamidine + L-glutamate + ADP + phosphate + H(+). It participates in purine metabolism; IMP biosynthesis via de novo pathway; 5-amino-1-(5-phospho-D-ribosyl)imidazole from N(2)-formyl-N(1)-(5-phospho-D-ribosyl)glycinamide: step 1/2. In terms of biological role, phosphoribosylformylglycinamidine synthase involved in the purines biosynthetic pathway. Catalyzes the ATP-dependent conversion of formylglycinamide ribonucleotide (FGAR) and glutamine to yield formylglycinamidine ribonucleotide (FGAM) and glutamate. The chain is Phosphoribosylformylglycinamidine synthase (ADE6) from Saccharomyces cerevisiae (strain ATCC 204508 / S288c) (Baker's yeast).